Consider the following 575-residue polypeptide: Phosphoenolpyruvate-protein phosphotransferase (575 aa).

Histidine 189 acts as the Tele-phosphohistidine intermediate in catalysis. Phosphoenolpyruvate is bound by residues arginine 296 and arginine 332. Positions 431 and 455 each coordinate Mg(2+). Phosphoenolpyruvate-binding positions include 454 to 455 (ND) and arginine 465. Cysteine 502 functions as the Proton donor in the catalytic mechanism.

The protein belongs to the PEP-utilizing enzyme family. As to quaternary structure, homodimer. It depends on Mg(2+) as a cofactor.

It is found in the cytoplasm. The enzyme catalyses L-histidyl-[protein] + phosphoenolpyruvate = N(pros)-phospho-L-histidyl-[protein] + pyruvate. Its function is as follows. General (non sugar-specific) component of the phosphoenolpyruvate-dependent sugar phosphotransferase system (sugar PTS). This major carbohydrate active-transport system catalyzes the phosphorylation of incoming sugar substrates concomitantly with their translocation across the cell membrane. Enzyme I transfers the phosphoryl group from phosphoenolpyruvate (PEP) to the phosphoryl carrier protein (HPr). In Salmonella typhimurium (strain LT2 / SGSC1412 / ATCC 700720), this protein is Phosphoenolpyruvate-protein phosphotransferase (ptsI).